Here is an 816-residue protein sequence, read N- to C-terminus: Probable E3 ubiquitin-protein ligase hulA (816 aa).

One can recognise a C2 domain in the interval 1-112 (MGSNLPAQPN…QMGGDEMLTR (112 aa)). 2 disordered regions span residues 134–238 (NLST…WERR) and 253–353 (RTTT…YFVD). Composition is skewed to polar residues over residues 151–168 (MQPSTSSGLVPQVSASTP), 177–202 (ADPTASNPSLHPQRVPSTTRPSSTIV), 217–226 (SRTNLSSFED), and 253–270 (RTTTWTRPSNNYNEQTSR). The WW 1 domain maps to 229-262 (GRLPAGWERREDNLGRTYYVDHNTRTTTWTRPSN). Over residues 279-294 (LERRAHQSRMLPEDRT) the composition is skewed to basic and acidic residues. The span at 295–309 (GASSPNLQENQQQAQ) shows a compositional bias: polar residues. Low complexity predominate over residues 310–333 (TPPAGGSASAVSMMATGATTAGTG). WW domains are found at residues 333–366 (GELPPGWEQRTTPEGRPYFVDHNTRTTTWVDPRR) and 393–426 (GPLPSGWEMRLTNTARVYFVDHNTKTTTWDDPRL). The 335-residue stretch at 482–816 (SASDLKKRLM…VEETLGFGQE (335 aa)) folds into the HECT domain. The active-site Glycyl thioester intermediate is cysteine 784.

It belongs to the RSP5/NEDD4 family. In terms of assembly, interacts with creD.

The protein resides in the cytoplasm. The enzyme catalyses S-ubiquitinyl-[E2 ubiquitin-conjugating enzyme]-L-cysteine + [acceptor protein]-L-lysine = [E2 ubiquitin-conjugating enzyme]-L-cysteine + N(6)-ubiquitinyl-[acceptor protein]-L-lysine.. It functions in the pathway protein modification; protein ubiquitination. In terms of biological role, E3 ubiquitin-protein ligase which accepts ubiquitin from an E2 ubiquitin-conjugating enzyme in the form of a thioester and then directly transfers the ubiquitin to targeted substrates. Probably involved in the regulatory network controlling carbon source utilization. The sequence is that of Probable E3 ubiquitin-protein ligase hulA (hulA) from Aspergillus oryzae (strain ATCC 42149 / RIB 40) (Yellow koji mold).